We begin with the raw amino-acid sequence, 548 residues long: BTB/POZ domain-containing protein At5g17580 (548 aa).

One can recognise a BTB domain in the interval 7–74 (SDLHINVKGV…CNGSEFKFTS (68 aa)). Positions 180–442 (DWKSEDLITI…VNVLCVSQLQ (263 aa)) constitute an NPH3 domain. Phosphotyrosine is present on Y383. Positions 442–493 (QIRDTVAKEIKGMEEKVDEEEEEEIEVSSDEDEMEKMSNKLLGLEIENDECV) form a coiled coil.

It belongs to the NPH3 family.

It participates in protein modification; protein ubiquitination. Functionally, may act as a substrate-specific adapter of an E3 ubiquitin-protein ligase complex (CUL3-RBX1-BTB) which mediates the ubiquitination and subsequent proteasomal degradation of target proteins. This is BTB/POZ domain-containing protein At5g17580 from Arabidopsis thaliana (Mouse-ear cress).